Here is a 349-residue protein sequence, read N- to C-terminus: UDP-3-O-acylglucosamine N-acyltransferase (349 aa).

His242 serves as the catalytic Proton acceptor.

Belongs to the transferase hexapeptide repeat family. LpxD subfamily. In terms of assembly, homotrimer.

The enzyme catalyses a UDP-3-O-[(3R)-3-hydroxyacyl]-alpha-D-glucosamine + a (3R)-hydroxyacyl-[ACP] = a UDP-2-N,3-O-bis[(3R)-3-hydroxyacyl]-alpha-D-glucosamine + holo-[ACP] + H(+). Its pathway is bacterial outer membrane biogenesis; LPS lipid A biosynthesis. Its function is as follows. Catalyzes the N-acylation of UDP-3-O-acylglucosamine using 3-hydroxyacyl-ACP as the acyl donor. Is involved in the biosynthesis of lipid A, a phosphorylated glycolipid that anchors the lipopolysaccharide to the outer membrane of the cell. This chain is UDP-3-O-acylglucosamine N-acyltransferase, found in Cytophaga hutchinsonii (strain ATCC 33406 / DSM 1761 / CIP 103989 / NBRC 15051 / NCIMB 9469 / D465).